The chain runs to 291 residues: Pantothenate synthetase (291 aa).

Residue 30 to 37 (MGALHAGH) coordinates ATP. The Proton donor role is filled by H37. Position 61 (Q61) interacts with (R)-pantoate. Q61 serves as a coordination point for beta-alanine. Position 147 to 150 (147 to 150 (GQKD)) interacts with ATP. Q153 is a binding site for (R)-pantoate. Residues V176 and 184-187 (LSSR) each bind ATP.

This sequence belongs to the pantothenate synthetase family. In terms of assembly, homodimer.

It is found in the cytoplasm. The catalysed reaction is (R)-pantoate + beta-alanine + ATP = (R)-pantothenate + AMP + diphosphate + H(+). The protein operates within cofactor biosynthesis; (R)-pantothenate biosynthesis; (R)-pantothenate from (R)-pantoate and beta-alanine: step 1/1. In terms of biological role, catalyzes the condensation of pantoate with beta-alanine in an ATP-dependent reaction via a pantoyl-adenylate intermediate. This chain is Pantothenate synthetase, found in Koribacter versatilis (strain Ellin345).